Consider the following 251-residue polypeptide: MTSLVSLENVSVSFGQRRVLSDVSLELSPGKILTLLGPNGAGKSTLVRVVLGLVAPDEGVIKHNGQLRIGYVPQKLYLDTTLPLTVNRFLRLRPGTQKTDILPALKRVQAGHLIDAPMQKLSGGETQRVLLARALLNRPQLLVLDEPTQGVDVNGQVALYDLIDQLRRELDCAVLMVSHDLHLVMAKTDEVLCLNHHICCSGAPEVVSMHPEFISMFGPRGAEQLGIYRHHHNHRHDLQGRIVLRRGNGHS.

The ABC transporter domain occupies 5–220 (VSLENVSVSF…PEFISMFGPR (216 aa)). 37–44 (GPNGAGKS) contacts ATP.

It belongs to the ABC transporter superfamily. Zinc importer (TC 3.A.1.15.5) family. As to quaternary structure, the complex is composed of two ATP-binding proteins (ZnuC), two transmembrane proteins (ZnuB) and a solute-binding protein (ZnuA).

Its subcellular location is the cell inner membrane. It catalyses the reaction Zn(2+)(out) + ATP(in) + H2O(in) = Zn(2+)(in) + ADP(in) + phosphate(in) + H(+)(in). Its function is as follows. Part of the ABC transporter complex ZnuABC involved in zinc import. Responsible for energy coupling to the transport system. Seems to be important for the virulence. The chain is Zinc import ATP-binding protein ZnuC from Salmonella typhimurium (strain LT2 / SGSC1412 / ATCC 700720).